Consider the following 194-residue polypeptide: Putative manganese efflux pump MntP (194 aa).

Helical transmembrane passes span Leu6–Leu26, Trp35–Leu55, Val66–Ala86, Gly109–Leu129, Val142–Leu162, and Arg174–Val194.

Belongs to the MntP (TC 9.B.29) family.

The protein resides in the cell membrane. Its function is as follows. Probably functions as a manganese efflux pump. The polypeptide is Putative manganese efflux pump MntP (Moorella thermoacetica (strain ATCC 39073 / JCM 9320)).